The sequence spans 191 residues: Pyridoxal 5'-phosphate synthase subunit PdxT (191 aa).

46-48 (GES) provides a ligand contact to L-glutamine. C78 serves as the catalytic Nucleophile. Residues R105 and 134-135 (IR) each bind L-glutamine. Active-site charge relay system residues include H170 and E172.

The protein belongs to the glutaminase PdxT/SNO family. As to quaternary structure, in the presence of PdxS, forms a dodecamer of heterodimers. Only shows activity in the heterodimer.

It carries out the reaction aldehydo-D-ribose 5-phosphate + D-glyceraldehyde 3-phosphate + L-glutamine = pyridoxal 5'-phosphate + L-glutamate + phosphate + 3 H2O + H(+). The catalysed reaction is L-glutamine + H2O = L-glutamate + NH4(+). It functions in the pathway cofactor biosynthesis; pyridoxal 5'-phosphate biosynthesis. In terms of biological role, catalyzes the hydrolysis of glutamine to glutamate and ammonia as part of the biosynthesis of pyridoxal 5'-phosphate. The resulting ammonia molecule is channeled to the active site of PdxS. The polypeptide is Pyridoxal 5'-phosphate synthase subunit PdxT (Carboxydothermus hydrogenoformans (strain ATCC BAA-161 / DSM 6008 / Z-2901)).